Reading from the N-terminus, the 325-residue chain is Ribosomal RNA small subunit methyltransferase H (325 aa).

S-adenosyl-L-methionine contacts are provided by residues 38 to 40 (GGY), Asp55, Phe82, Asp103, and Gln110. Disordered stretches follow at residues 256-275 (SGGD…AARA) and 281-307 (PARK…RSAV).

The protein belongs to the methyltransferase superfamily. RsmH family.

It localises to the cytoplasm. The catalysed reaction is cytidine(1402) in 16S rRNA + S-adenosyl-L-methionine = N(4)-methylcytidine(1402) in 16S rRNA + S-adenosyl-L-homocysteine + H(+). Functionally, specifically methylates the N4 position of cytidine in position 1402 (C1402) of 16S rRNA. This Sphingopyxis alaskensis (strain DSM 13593 / LMG 18877 / RB2256) (Sphingomonas alaskensis) protein is Ribosomal RNA small subunit methyltransferase H.